A 156-amino-acid chain; its full sequence is Protein FAM162A (156 aa).

The disordered stretch occupies residues 37 to 57 (TNGFCSKPQESPKPPDQHTYS). Residues 78–104 (RFKKEDEIPETVSFEMLDAAKNKVRVK) are required for proapoptotic activity. A helical transmembrane segment spans residues 105–122 (ISYVMIALTVAGCVLMVI).

The protein belongs to the UPF0389 family. In terms of assembly, interacts with HSP90AB1; HSP90AB1 is essential for FAM162A mitochondrial localization and pro-apoptotic activity. Interacts with VDAC2; the interaction is probably involved in inducing mitochondrial permeability transition.

The protein localises to the mitochondrion membrane. In terms of biological role, proposed to be involved in regulation of apoptosis; the exact mechanism may differ between cell types/tissues. May be involved in hypoxia-induced cell death of transformed cells implicating cytochrome C release and caspase activation (such as CASP9) and inducing mitochondrial permeability transition. May be involved in hypoxia-induced cell death of neuronal cells probably by promoting release of AIFM1 from mitochondria to cytoplasm and its translocation to the nucleus; however, the involvement of caspases has been reported conflictingly. In Bos taurus (Bovine), this protein is Protein FAM162A (FAM162A).